Reading from the N-terminus, the 382-residue chain is ATP phosphoribosyltransferase regulatory subunit (382 aa).

It belongs to the class-II aminoacyl-tRNA synthetase family. HisZ subfamily. As to quaternary structure, heteromultimer composed of HisG and HisZ subunits.

It is found in the cytoplasm. Its pathway is amino-acid biosynthesis; L-histidine biosynthesis; L-histidine from 5-phospho-alpha-D-ribose 1-diphosphate: step 1/9. In terms of biological role, required for the first step of histidine biosynthesis. May allow the feedback regulation of ATP phosphoribosyltransferase activity by histidine. The chain is ATP phosphoribosyltransferase regulatory subunit from Burkholderia pseudomallei (strain K96243).